The following is a 1119-amino-acid chain: DNA-directed RNA polymerase subunit beta (1119 aa).

Belongs to the RNA polymerase beta chain family. The RNAP catalytic core consists of 2 alpha, 1 beta, 1 beta' and 1 omega subunit. When a sigma factor is associated with the core the holoenzyme is formed, which can initiate transcription.

The catalysed reaction is RNA(n) + a ribonucleoside 5'-triphosphate = RNA(n+1) + diphosphate. Functionally, DNA-dependent RNA polymerase catalyzes the transcription of DNA into RNA using the four ribonucleoside triphosphates as substrates. In Thermus thermophilus (strain ATCC 27634 / DSM 579 / HB8), this protein is DNA-directed RNA polymerase subunit beta.